Here is a 213-residue protein sequence, read N- to C-terminus: ATP synthase peripheral stalk subunit OSCP, mitochondrial (213 aa).

A mitochondrion-targeting transit peptide spans 1–23 (MATPAVSGLSRQVRCFSTSVVRP). The SIFI-degron signature appears at 5-23 (AVSGLSRQVRCFSTSVVRP). Lys-54, Lys-60, Lys-70, and Lys-73 each carry N6-acetyllysine. Lys-90 carries the post-translational modification N6-succinyllysine. An N6-acetyllysine; alternate mark is found at Lys-158 and Lys-162. 2 positions are modified to N6-succinyllysine; alternate: Lys-158 and Lys-162. Lys-172, Lys-176, and Lys-192 each carry N6-acetyllysine. N6-succinyllysine is present on Lys-199.

The protein belongs to the ATPase delta chain family. As to quaternary structure, component of the ATP synthase complex composed at least of ATP5F1A/subunit alpha, ATP5F1B/subunit beta, ATP5MC1/subunit c (homooctomer), MT-ATP6/subunit a, MT-ATP8/subunit 8, ATP5ME/subunit e, ATP5MF/subunit f, ATP5MG/subunit g, ATP5MK/subunit k, ATP5MJ/subunit j, ATP5F1C/subunit gamma, ATP5F1D/subunit delta, ATP5F1E/subunit epsilon, ATP5PF/subunit F6, ATP5PB/subunit b, ATP5PD/subunit d, ATP5PO/subunit OSCP. ATP synthase complex consists of a soluble F(1) head domain (subunits alpha(3) and beta(3)) - the catalytic core - and a membrane F(0) domain - the membrane proton channel (subunits c, a, 8, e, f, g, k and j). These two domains are linked by a central stalk (subunits gamma, delta, and epsilon) rotating inside the F1 region and a stationary peripheral stalk (subunits F6, b, d, and OSCP). In terms of processing, acetylation at Lys-162 decreases ATP production. Deacetylated by SIRT3. In response to mitochondrial stress, the precursor protein is ubiquitinated by the SIFI complex in the cytoplasm before mitochondrial import, leading to its degradation. Within the SIFI complex, UBR4 initiates ubiquitin chain that are further elongated or branched by KCMF1.

Its subcellular location is the mitochondrion. It localises to the mitochondrion inner membrane. Functionally, subunit OSCP, of the mitochondrial membrane ATP synthase complex (F(1)F(0) ATP synthase or Complex V) that produces ATP from ADP in the presence of a proton gradient across the membrane which is generated by electron transport complexes of the respiratory chain. ATP synthase complex consist of a soluble F(1) head domain - the catalytic core - and a membrane F(1) domain - the membrane proton channel. These two domains are linked by a central stalk rotating inside the F(1) region and a stationary peripheral stalk. During catalysis, ATP synthesis in the catalytic domain of F(1) is coupled via a rotary mechanism of the central stalk subunits to proton translocation. In vivo, can only synthesize ATP although its ATP hydrolase activity can be activated artificially in vitro. Part of the complex F(0) domain. Part of the complex F(0) domain and the peripheric stalk, which acts as a stator to hold the catalytic alpha(3)beta(3) subcomplex and subunit a/ATP6 static relative to the rotary elements. This chain is ATP synthase peripheral stalk subunit OSCP, mitochondrial, found in Pongo abelii (Sumatran orangutan).